The chain runs to 486 residues: MSKDIRVRYAPSPTGLLHIGNARTALFNYLYARHHGGTFLIRIEDTDRKRHVEDGERSQLENLRWLGMDWDESPESHENYRQSERLDLYQKYIDQLLAEGKAYKSYVTEEELAAERERQEVAGETPRYINEYLGMSEEEKAAYIAEREAAGIIPTVRLAVNESGIYKWHDMVKGDIEFEGGNIGGDWVIQKKDGYPTYNFAVVIDDHDMQISHVIRGDDHIANTPKQLMVYEALGWEAPEFGHMTLIINSETGKKLSKRDTNTLQFIEDYRKKGYLPEAVFNFIALLGWNPGGEDEIFSREELIKLFDENRLSKSPAAFDQKKLDWMSNDYIKNADLETIFEMAKPFLEEAGRLTDKAEKLVELYKPQMKSVDEIIPLTDLFFSDFPELTEAEREVMTGETVPTVLEAFKAKLEAMTDDEFVTENIFPQIKAVQKETGIKGKNLFMPIRIAVSGEMHGPELPDTIFLLGREKSIQHIENMLKEISK.

A 'HIGH' region motif is present at residues 11-21 (PSPTGLLHIGN). The 'KMSKS' region signature appears at 255 to 259 (KLSKR). Lys258 provides a ligand contact to ATP.

Belongs to the class-I aminoacyl-tRNA synthetase family. Glutamate--tRNA ligase type 1 subfamily. Monomer.

The protein resides in the cytoplasm. The enzyme catalyses tRNA(Glu) + L-glutamate + ATP = L-glutamyl-tRNA(Glu) + AMP + diphosphate. Its function is as follows. Catalyzes the attachment of glutamate to tRNA(Glu) in a two-step reaction: glutamate is first activated by ATP to form Glu-AMP and then transferred to the acceptor end of tRNA(Glu). In Streptococcus pneumoniae serotype 19F (strain G54), this protein is Glutamate--tRNA ligase.